A 243-amino-acid polypeptide reads, in one-letter code: Orotidine 5'-phosphate decarboxylase (243 aa).

Residues Asp19, Lys41, Asp69–Thr78, Thr124, Arg185, Gln194, Gly214, and Arg215 contribute to the substrate site. Catalysis depends on Lys71, which acts as the Proton donor.

The protein belongs to the OMP decarboxylase family. Type 1 subfamily. As to quaternary structure, homodimer.

It carries out the reaction orotidine 5'-phosphate + H(+) = UMP + CO2. Its pathway is pyrimidine metabolism; UMP biosynthesis via de novo pathway; UMP from orotate: step 2/2. In terms of biological role, catalyzes the decarboxylation of orotidine 5'-monophosphate (OMP) to uridine 5'-monophosphate (UMP). The polypeptide is Orotidine 5'-phosphate decarboxylase (Xanthomonas campestris pv. campestris (strain 8004)).